The sequence spans 260 residues: Ribosomal RNA small subunit methyltransferase G (260 aa).

Positions 111, 116, and 181 each coordinate S-adenosyl-L-methionine.

This sequence belongs to the methyltransferase superfamily. RNA methyltransferase RsmG family.

Its subcellular location is the cytoplasm. The enzyme catalyses guanosine(527) in 16S rRNA + S-adenosyl-L-methionine = N(7)-methylguanosine(527) in 16S rRNA + S-adenosyl-L-homocysteine. Functionally, specifically methylates the N7 position of guanine in position 527 of 16S rRNA. In Nitrobacter hamburgensis (strain DSM 10229 / NCIMB 13809 / X14), this protein is Ribosomal RNA small subunit methyltransferase G.